The following is a 1138-amino-acid chain: Transmembrane channel-like protein 3 (1138 aa).

A compositionally biased stretch (low complexity) spans M1–A15. Disordered regions lie at residues M1 to K20 and N29 to D54. Over M1–W155 the chain is Cytoplasmic. The helical transmembrane segment at L156–L176 threads the bilayer. Residues L177–D202 lie on the Extracellular side of the membrane. Residues T203–S223 form a helical membrane-spanning segment. The Cytoplasmic portion of the chain corresponds to D224–R233. Residues L234 to L254 traverse the membrane as a helical segment. The Extracellular portion of the chain corresponds to K255 to R327. N-linked (GlcNAc...) asparagine glycosylation occurs at N272. The helical transmembrane segment at I328–V348 threads the bilayer. Topologically, residues V349–E369 are cytoplasmic. Residues V370–A390 form a helical membrane-spanning segment. Topologically, residues L391–R401 are extracellular. The chain crosses the membrane as a helical span at residues F402–L422. Topologically, residues L423 to M508 are cytoplasmic. Residues L509 to F529 traverse the membrane as a helical segment. At R530–G569 the chain is on the extracellular side. Residues M570–I590 traverse the membrane as a helical segment. Over G591–N618 the chain is Cytoplasmic. Residues F619–I639 form a helical membrane-spanning segment. At A640–V676 the chain is on the extracellular side. Residues I677–I697 form a helical membrane-spanning segment. The Cytoplasmic portion of the chain corresponds to Y698–V1138. Residues N753–D763 show a composition bias toward polar residues. Disordered stretches follow at residues N753–S859, S973–P1005, and P1065–D1095. The span at G764–G773 shows a compositional bias: basic and acidic residues. Composition is skewed to polar residues over residues S777–N795 and T804–V813. The segment covering T828–A845 has biased composition (low complexity). A compositionally biased stretch (basic residues) spans H989–R998. The span at S1074–D1095 shows a compositional bias: low complexity.

Belongs to the TMC family. In terms of tissue distribution, expressed in a range of tissues including cerebrum, cerebellum, retina, cochlea, lung, liver and heart. Also expressed in the apical, medial and basal portions of the basillar papilla.

The protein resides in the membrane. Its function is as follows. Probable component of an ion channel. The sequence is that of Transmembrane channel-like protein 3 from Gallus gallus (Chicken).